The following is a 571-amino-acid chain: MTNMRTMIPAGSSVLVWVTCLLLAFVTTVTGPKVIQPEVDTPLGRVRGRQVGVKDTDRMVNVFLGIPFAQAPVGPLRFSAPLPPQPWEGVRDASINPPMCLQDVEKMINSRFGLNEKIKIFPISEDCLTLNIYSPTEITAGDKRPVMVWIHGGSLLVGSSTSQDGSALAAYGDVVVVTVQYRLGIFGFLSTGDKHMPGNRGFLDVVAALRWVQGNIAPFGGDPNCVTIFGNSAGGMIVSSLFLSPISAGLFHRAISQSGIVTTIMMEDMKPWPEAQNFANSVACGSASPAELVQCLLQKEGKDLIKQKNVNISYIVNDSFFPQRPEKLLADQQFPTVPYLLGVTNHEFGWLLLKSLNILDKLEHLSREDLLEISRPFLAIMEVPPEIMPTVIDEYLDNGSDQSATRYAFQELLGDISFIIPTLNFSKYLRDAGCPVFLYEFQHTPSSFAKFKPAWVKADHASENSFVFGGPFLTDESSLLAFPEATEEEKQLSLTMMAQWSQFARTGNPNGKGLPPWPQLNQLEQYLEIGLESRTGVKLKKGRLQFWTETLPRKIQEWHREQRSRKVPEEL.

An N-terminal signal peptide occupies residues Met1–Gly31. A disulfide bridge links Cys100 with Cys127. Catalysis depends on Ser232, which acts as the Acyl-ester intermediate. A disulfide bridge connects residues Cys284 and Cys295. Asn311 carries an N-linked (GlcNAc...) asparagine glycan. Residues Glu347 and His460 each act as charge relay system in the active site. The Prevents secretion from ER signature appears at Pro568 to Leu571.

This sequence belongs to the type-B carboxylesterase/lipase family.

The protein resides in the endoplasmic reticulum lumen. It carries out the reaction a carboxylic ester + H2O = an alcohol + a carboxylate + H(+). Functionally, involved in the detoxification of xenobiotics and in the activation of ester and amide prodrugs. This Mus musculus (Mouse) protein is Carboxylesterase 3B (Ces3b).